An 851-amino-acid polypeptide reads, in one-letter code: Pentatricopeptide repeat-containing protein At3g54980, mitochondrial (851 aa).

The transit peptide at 1-26 (MRSLLVFRKIPSRIRLRNLRNNKPFC) directs the protein to the mitochondrion. 19 PPR repeats span residues 162 to 196 (NSRAFNYLLNAYSKDRQTDHAVDIVNQMLELDVIP), 197 to 231 (FFPYVNRTLSALVQRNSLTEAKELYSRMVAIGVDG), 232 to 266 (DNVTTQLLMRASLREEKPAEALEVLSRAIERGAEP), 267 to 301 (DSLLYSLAVQACCKTLDLAMANSLLREMKEKKLCV), 303 to 337 (SQETYTSVILASVKQGNMDDAIRLKDEMLSDGISM), 338 to 372 (NVVAATSLITGHCKNNDLVSALVLFDKMEKEGPSP), 373 to 407 (NSVTFSVLIEWFRKNGEMEKALEFYKKMEVLGLTP), 408 to 438 (SVFHVHTIIQGWLKGQKHEEALKLFDESFET), 442 to 476 (NVFVCNTILSWLCKQGKTDEATELLSKMESRGIGP), 477 to 511 (NVVSYNNVMLGHCRQKNMDLARIVFSNILEKGLKP), 512 to 546 (NNYTYSILIDGCFRNHDEQNALEVVNHMTSSNIEV), 547 to 577 (NGVVYQTIINGLCKVGQTSKARELLANMIEE), 583 to 617 (SCMSYNSIIDGFFKEGEMDSAVAAYEEMCGNGISP), 618 to 652 (NVITYTSLMNGLCKNNRMDQALEMRDEMKNKGVKL), 653 to 687 (DIPAYGALIDGFCKRSNMESASALFSELLEEGLNP), 688 to 722 (SQPIYNSLISGFRNLGNMVAALDLYKKMLKDGLRC), 723 to 757 (DLGTYTTLIDGLLKDGNLILASELYTEMQAVGLVP), 758 to 792 (DEIIYTVIVNGLSKKGQFVKVVKMFEEMKKNNVTP), and 793 to 827 (NVLIYNAVIAGHYREGNLDEAFRLHDEMLDKGILP).

The protein belongs to the PPR family. P subfamily.

The protein localises to the mitochondrion. This chain is Pentatricopeptide repeat-containing protein At3g54980, mitochondrial, found in Arabidopsis thaliana (Mouse-ear cress).